The chain runs to 176 residues: ATP-dependent protease subunit HslV (176 aa).

Residue Thr-2 is part of the active site. Na(+) contacts are provided by Ala-157, Cys-160, and Thr-163.

The protein belongs to the peptidase T1B family. HslV subfamily. In terms of assembly, a double ring-shaped homohexamer of HslV is capped on each side by a ring-shaped HslU homohexamer. The assembly of the HslU/HslV complex is dependent on binding of ATP.

The protein localises to the cytoplasm. The catalysed reaction is ATP-dependent cleavage of peptide bonds with broad specificity.. Its activity is regulated as follows. Allosterically activated by HslU binding. Its function is as follows. Protease subunit of a proteasome-like degradation complex believed to be a general protein degrading machinery. The protein is ATP-dependent protease subunit HslV of Buchnera aphidicola subsp. Schizaphis graminum (strain Sg).